A 179-amino-acid polypeptide reads, in one-letter code: Large ribosomal subunit protein uL5 (179 aa).

It belongs to the universal ribosomal protein uL5 family. In terms of assembly, part of the 50S ribosomal subunit; part of the 5S rRNA/L5/L18/L25 subcomplex. Contacts the 5S rRNA and the P site tRNA. Forms a bridge to the 30S subunit in the 70S ribosome.

Its function is as follows. This is one of the proteins that bind and probably mediate the attachment of the 5S RNA into the large ribosomal subunit, where it forms part of the central protuberance. In the 70S ribosome it contacts protein S13 of the 30S subunit (bridge B1b), connecting the 2 subunits; this bridge is implicated in subunit movement. Contacts the P site tRNA; the 5S rRNA and some of its associated proteins might help stabilize positioning of ribosome-bound tRNAs. The polypeptide is Large ribosomal subunit protein uL5 (Rickettsia peacockii (strain Rustic)).